A 124-amino-acid chain; its full sequence is MTTIAAAGLNVATPRVVVRPVARVLGPVRLNYPWKFGSMKRMVVVKATSEGEISEKVEKSIQEAKETCADDPVSGECVAAWDEVEELSAAASHARDKKKAGGSDPLEEYCNDNPETDECRTYDN.

The N-terminal 47 residues, 1–47 (MTTIAAAGLNVATPRVVVRPVARVLGPVRLNYPWKFGSMKRMVVVKA), are a transit peptide targeting the chloroplast. 2 disulfides stabilise this stretch: cysteine 68–cysteine 77 and cysteine 110–cysteine 119. The segment at 90–124 (AASHARDKKKAGGSDPLEEYCNDNPETDECRTYDN) is disordered. Residues 105-116 (PLEEYCNDNPET) show a composition bias toward acidic residues.

The protein belongs to the CP12 family. In terms of assembly, monomer. Component of a complex that contains two dimers of PRK, two tetramers of GAPDH and CP12. CP12 associates with GAPDH, causing its conformation to change. This GAPDH/CP12 complex binds PRK to form a half-complex (one unit). This unit probably dimerizes due partially to interactions between the enzymes of each unit. Post-translationally, contains two disulfide bonds; only the oxidized protein, with two disulfide bonds, is active in complex formation. The C-terminal disulfide is involved in the interaction with GAPDH and the N-terminal disulfide mediates the binding of PRK with this binary complex. Mostly expressed in flowers, hypocotyl, cotyledons, leaves, stems, and flower stalks. Barely detectable in roots and siliques. Present in root tips and lateral roots. Accumulates in the cotyledons of etiolated seedlings.

The protein resides in the plastid. It is found in the chloroplast. In terms of biological role, acts as a linker essential in the assembly of a core complex of PRK/GAPDH. Coordinates the reversible inactivation of chloroplast enzymes GAPDH and PRK during darkness in photosynthetic tissues. In Arabidopsis thaliana (Mouse-ear cress), this protein is Calvin cycle protein CP12-1, chloroplastic (CP12-1).